A 311-amino-acid chain; its full sequence is Olfactory receptor-like protein OLF1 (311 aa).

The Extracellular portion of the chain corresponds to 1-24 (MDGNYTLVTEFILLGFPTRPELQI). Asn4 is a glycosylation site (N-linked (GlcNAc...) asparagine). The helical transmembrane segment at 25–48 (VLFLVFLTLYGIILTGNIGLMMLI) threads the bilayer. Residues 49–56 (RTDPHLQT) lie on the Cytoplasmic side of the membrane. A helical transmembrane segment spans residues 57-78 (PMYFFLSNLSFADLCFSSAIVP). Topologically, residues 79–99 (KMLVNFLSENKSISLYGCALQ) are extracellular. The helical transmembrane segment at 100-119 (FYFSCAFADTESFILAAMAY) threads the bilayer. The Cytoplasmic segment spans residues 120-138 (DRYVAICNPLLYTVVMSRG). Residues 139-157 (ICVWLIVLSYIGGNMSSLV) traverse the membrane as a helical segment. The Extracellular segment spans residues 158–195 (HTSFAFILKYCDKNVINHFFCDLPPLLKLSCTDTSVNE). Residues 196-218 (WLLSTYGSSVEIFCFIVIVISYY) form a helical membrane-spanning segment. Residues 219–235 (FILRSVLRIRSSSGRKK) lie on the Cytoplasmic side of the membrane. A helical membrane pass occupies residues 236–259 (TFSTCASHLTSVAIYQGTLLFIYS). Residues 260-271 (RPTYLYTPNTDK) are Extracellular-facing. A helical transmembrane segment spans residues 272–291 (IISVFYTIIIPVLNPLIYSL). Residues 292 to 311 (RNKDVKDAAKRAVRLKVDSS) lie on the Cytoplasmic side of the membrane.

It belongs to the G-protein coupled receptor 1 family.

It is found in the cell membrane. Functionally, putative odorant or sperm cell receptor. In Canis lupus familiaris (Dog), this protein is Olfactory receptor-like protein OLF1.